Reading from the N-terminus, the 327-residue chain is MEELLIEDSQRFTIFPIQHPECWNWYKKLESLTWTAQEVDMCKDIDDWEAMPKPQREFYKQILAFFVVADEIVIENLLTNFMREIKVKEVLYFYTMQAAQECVHSEAYSIQVKTLIPDEKEQQRIFSGIEKHPIIRKMAQWVQQWMDPVKNSLGERLVGFAAVEGILFQNHFVAIQFLKEQNIMPGLVSYNEFISRDEGMHCSFACFLISNYLNNIPEEKIIHKILKEAVELVDEFISYAFDKARGSVPGFSKEMLFQYIRYFTDNLCFMLQCKSIYKVENPFPQMTKFFLNEVEKTNFFELRPTQYQNCVKDDAFAFKLFLNDDDF.

The Fe cation site is built by Asp-70, Glu-101, and His-104. Tyr-108 is an active-site residue. The Fe cation site is built by Glu-164, Glu-198, and His-201.

It belongs to the ribonucleoside diphosphate reductase small chain family. In terms of assembly, heterotetramer composed of a homodimer of the large subunit (R1) and a homodimer of the small subunit (R2). Larger multisubunit protein complex are also active, composed of (R1)n(R2)n. It depends on Fe cation as a cofactor.

It catalyses the reaction a 2'-deoxyribonucleoside 5'-diphosphate + [thioredoxin]-disulfide + H2O = a ribonucleoside 5'-diphosphate + [thioredoxin]-dithiol. Its function is as follows. Ribonucleoside-diphosphate reductase holoenzyme provides the precursors necessary for viral DNA synthesis. Allows virus growth in non-dividing cells. Catalyzes the biosynthesis of deoxyribonucleotides from the corresponding ribonucleotides. The polypeptide is Ribonucleoside-diphosphate reductase small chain (Ornithodoros (relapsing fever ticks)).